Reading from the N-terminus, the 201-residue chain is MIILNYNKTFFLKSISNISDIQIEHGIEIAFIGYSNSGKSSAINALTNQKKLARFSKTPGRTQLINLFQVTSDFRIVDLPGYGYAKAPLLIKIKWQNMIYSYLKNSRSLKGLVLLMDIRYPLKILDQDIISMALNCKIPILLLLTKCDKFTINNQKIQFQKVYEKLDKFLNELHIQLFSSLKKIGIEKLKSKLNFWYEKYR.

Residues 25–199 (HGIEIAFIGY…KSKLNFWYEK (175 aa)) enclose the EngB-type G domain. Residues 33–40 (GYSNSGKS), 60–64 (GRTQL), 78–81 (DLPG), 145–148 (TKCD), and 178–180 (FSS) each bind GTP. Mg(2+) is bound by residues Ser40 and Thr62.

Belongs to the TRAFAC class TrmE-Era-EngA-EngB-Septin-like GTPase superfamily. EngB GTPase family. Requires Mg(2+) as cofactor.

Functionally, necessary for normal cell division and for the maintenance of normal septation. The polypeptide is Probable GTP-binding protein EngB (Buchnera aphidicola subsp. Schizaphis graminum (strain Sg)).